A 235-amino-acid chain; its full sequence is MEKLEMLYEGKAKKIYATDKADEVIVYYKDDATAFNGEKKGQIEDKGIMNNAITSVLFEILEKAGVKTHFIEKLNDREQLCKKVEIVPLEVIVRNVAAGSMAKRLGLEEGFKLKTTVFELSYKDDSLGDPLINDYHAVGIGATTFEELKVIYDMTAKINDTLKAVFKEQNINLIDFKVEFGRCADGTIVLADEISPDTCRFWDATTGEKLDKDRFRRDLGNVKDAYVEILKRISK.

This sequence belongs to the SAICAR synthetase family.

It catalyses the reaction 5-amino-1-(5-phospho-D-ribosyl)imidazole-4-carboxylate + L-aspartate + ATP = (2S)-2-[5-amino-1-(5-phospho-beta-D-ribosyl)imidazole-4-carboxamido]succinate + ADP + phosphate + 2 H(+). Its pathway is purine metabolism; IMP biosynthesis via de novo pathway; 5-amino-1-(5-phospho-D-ribosyl)imidazole-4-carboxamide from 5-amino-1-(5-phospho-D-ribosyl)imidazole-4-carboxylate: step 1/2. The protein is Phosphoribosylaminoimidazole-succinocarboxamide synthase of Clostridium beijerinckii (strain ATCC 51743 / NCIMB 8052) (Clostridium acetobutylicum).